Here is an 84-residue protein sequence, read N- to C-terminus: U21-theraphotoxin-Cg1b (84 aa).

The N-terminal stretch at 1–21 is a signal peptide; that stretch reads MKVSVLITLAVLGVMFLLTSA. A propeptide spanning residues 22 to 47 is cleaved from the precursor; the sequence is EERGSDQMDSPAWLKSMERIFQSEER. 3 disulfides stabilise this stretch: cysteine 49–cysteine 63, cysteine 56–cysteine 68, and cysteine 62–cysteine 76. The residue at position 82 (phenylalanine 82) is a Phenylalanine amide.

The protein belongs to the neurotoxin 10 (Hwtx-1) family. 05 (F4a) subfamily. As to expression, expressed by the venom gland.

It is found in the secreted. In terms of biological role, probable ion channel inhibitor. The protein is U21-theraphotoxin-Cg1b of Chilobrachys guangxiensis (Chinese earth tiger tarantula).